A 50-amino-acid polypeptide reads, in one-letter code: Large ribosomal subunit protein bL32c (50 aa).

Belongs to the bacterial ribosomal protein bL32 family.

It is found in the plastid. The sequence is that of Large ribosomal subunit protein bL32c (rpl32) from Euglena longa (Euglenophycean alga).